Consider the following 946-residue polypeptide: C-1-tetrahydrofolate synthase, cytoplasmic (946 aa).

Positions 2 to 319 (AGQVLDGKAC…PPLPLKLLTP (318 aa)) are methylenetetrahydrofolate dehydrogenase and cyclohydrolase. Residues 51-55 (YVRMK) and 98-100 (VQL) each bind substrate. Residue 169–171 (GRS) participates in NADP(+) binding. Position 176 is a phosphoserine (S176). S194 contributes to the NADP(+) binding site. Position 277–281 (277–281 (PGGVG)) interacts with substrate. T318 bears the Phosphothreonine mark. Positions 320-946 (VPSDIDISRA…DDDGEIDGLF (627 aa)) are formyltetrahydrofolate synthetase. S322 is subject to Phosphoserine. An ATP-binding site is contributed by 384 to 391 (TPLGEGKS).

In the N-terminal section; belongs to the tetrahydrofolate dehydrogenase/cyclohydrolase family. The protein in the C-terminal section; belongs to the formate--tetrahydrofolate ligase family. Homodimer.

The protein localises to the cytoplasm. It is found in the nucleus. The catalysed reaction is (6R)-5,10-methylene-5,6,7,8-tetrahydrofolate + NADP(+) = (6R)-5,10-methenyltetrahydrofolate + NADPH. It carries out the reaction (6R)-5,10-methenyltetrahydrofolate + H2O = (6R)-10-formyltetrahydrofolate + H(+). It catalyses the reaction (6S)-5,6,7,8-tetrahydrofolate + formate + ATP = (6R)-10-formyltetrahydrofolate + ADP + phosphate. It participates in one-carbon metabolism; tetrahydrofolate interconversion. Cytoplasmic isozyme of C-1-tetrahydrofolate synthase. The trifunctional enzyme catalyzes the interconversion of the one-carbon derivatives of tetrahydrofolate (THF) between different oxidation states by the enzymatic activities 10-formyltetrahydrofolate synthetase, 5,lO-methenyltetrahydrofolate cyclohydrolase, and 5,lO-methylenetetrahydrofolate dehydrogenase. Involved in the generation of one-carbon intermediates in the biosynthesis of the purine bases. This is C-1-tetrahydrofolate synthase, cytoplasmic (ADE3) from Saccharomyces cerevisiae (strain ATCC 204508 / S288c) (Baker's yeast).